The following is a 153-amino-acid chain: 6,7-dimethyl-8-ribityllumazine synthase (153 aa).

Residues Phe22, 56–58 (AFE), and 80–82 (TVI) contribute to the 5-amino-6-(D-ribitylamino)uracil site. Position 85-86 (85-86 (AT)) interacts with (2S)-2-hydroxy-3-oxobutyl phosphate. Catalysis depends on His88, which acts as the Proton donor. Phe113 is a 5-amino-6-(D-ribitylamino)uracil binding site. Residue Arg127 coordinates (2S)-2-hydroxy-3-oxobutyl phosphate.

The protein belongs to the DMRL synthase family.

It catalyses the reaction (2S)-2-hydroxy-3-oxobutyl phosphate + 5-amino-6-(D-ribitylamino)uracil = 6,7-dimethyl-8-(1-D-ribityl)lumazine + phosphate + 2 H2O + H(+). It participates in cofactor biosynthesis; riboflavin biosynthesis; riboflavin from 2-hydroxy-3-oxobutyl phosphate and 5-amino-6-(D-ribitylamino)uracil: step 1/2. Functionally, catalyzes the formation of 6,7-dimethyl-8-ribityllumazine by condensation of 5-amino-6-(D-ribitylamino)uracil with 3,4-dihydroxy-2-butanone 4-phosphate. This is the penultimate step in the biosynthesis of riboflavin. The sequence is that of 6,7-dimethyl-8-ribityllumazine synthase from Clostridium perfringens (strain ATCC 13124 / DSM 756 / JCM 1290 / NCIMB 6125 / NCTC 8237 / Type A).